We begin with the raw amino-acid sequence, 227 residues long: Flagellar L-ring protein (227 aa).

The first 16 residues, 1-16 (MRNIILFAAGTLLLSG), serve as a signal peptide directing secretion. A lipid anchor (N-palmitoyl cysteine) is attached at Cys17. A lipid anchor (S-diacylglycerol cysteine) is attached at Cys17.

It belongs to the FlgH family. As to quaternary structure, the basal body constitutes a major portion of the flagellar organelle and consists of four rings (L,P,S, and M) mounted on a central rod.

It localises to the cell outer membrane. The protein localises to the bacterial flagellum basal body. Assembles around the rod to form the L-ring and probably protects the motor/basal body from shearing forces during rotation. This Pseudoalteromonas translucida (strain TAC 125) protein is Flagellar L-ring protein.